A 354-amino-acid polypeptide reads, in one-letter code: Anthranilate phosphoribosyltransferase (354 aa).

Belongs to the anthranilate phosphoribosyltransferase family.

It carries out the reaction N-(5-phospho-beta-D-ribosyl)anthranilate + diphosphate = 5-phospho-alpha-D-ribose 1-diphosphate + anthranilate. The protein operates within amino-acid biosynthesis; L-tryptophan biosynthesis; L-tryptophan from chorismate: step 2/5. This is Anthranilate phosphoribosyltransferase (trp4) from Schizosaccharomyces pombe (strain 972 / ATCC 24843) (Fission yeast).